We begin with the raw amino-acid sequence, 172 residues long: uncharacterized protein (172 aa).

This is an uncharacterized protein from Homo sapiens (Human).